The primary structure comprises 371 residues: tRNA-specific 2-thiouridylase MnmA (371 aa).

ATP-binding positions include 11–18 (GMSGGVDS) and Met-37. The interaction with target base in tRNA stretch occupies residues 97–99 (NPD). The Nucleophile role is filled by Cys-102. Residues Cys-102 and Cys-199 are joined by a disulfide bond. Gly-127 is an ATP binding site. An interaction with tRNA region spans residues 149 to 151 (KDQ). Cys-199 acts as the Cysteine persulfide intermediate in catalysis. Residues 311 to 312 (RY) are interaction with tRNA.

It belongs to the MnmA/TRMU family.

The protein localises to the cytoplasm. It catalyses the reaction S-sulfanyl-L-cysteinyl-[protein] + uridine(34) in tRNA + AH2 + ATP = 2-thiouridine(34) in tRNA + L-cysteinyl-[protein] + A + AMP + diphosphate + H(+). Its function is as follows. Catalyzes the 2-thiolation of uridine at the wobble position (U34) of tRNA, leading to the formation of s(2)U34. This is tRNA-specific 2-thiouridylase MnmA from Idiomarina loihiensis (strain ATCC BAA-735 / DSM 15497 / L2-TR).